We begin with the raw amino-acid sequence, 482 residues long: Rho GTPase-activating protein 15 (482 aa).

Ser51, Ser111, Ser205, Ser208, and Ser250 each carry phosphoserine. The 112-residue stretch at 87–198 folds into the PH domain; it reads MVEKEGYLQK…WFHAIKNAID (112 aa). The region spanning 288 to 477 is the Rho-GAP domain; it reads SHLHTVCERE…FMLTEYDKIF (190 aa).

It is found in the cytoplasm. Its subcellular location is the membrane. In terms of biological role, GTPase activator for the Rho-type GTPases by converting them to an inactive GDP-bound state. Has activity toward RAC1. Overexpression results in an increase in actin stress fibers and cell contraction. This Rattus norvegicus (Rat) protein is Rho GTPase-activating protein 15 (Arhgap15).